Consider the following 247-residue polypeptide: tRNA pseudouridine synthase A (247 aa).

The Nucleophile role is filled by Asp-52. Tyr-110 is a substrate binding site.

This sequence belongs to the tRNA pseudouridine synthase TruA family. Homodimer.

It catalyses the reaction uridine(38/39/40) in tRNA = pseudouridine(38/39/40) in tRNA. Its function is as follows. Formation of pseudouridine at positions 38, 39 and 40 in the anticodon stem and loop of transfer RNAs. This chain is tRNA pseudouridine synthase A, found in Geobacter sp. (strain M21).